The chain runs to 482 residues: CBL-interacting serine/threonine-protein kinase 23 (482 aa).

Low complexity predominate over residues 1–25 (MASRTTPSRSTPSRSTPSGSSSGGR). A disordered region spans residues 1–29 (MASRTTPSRSTPSRSTPSGSSSGGRTRVG). Residues 31–286 (YELGRTLGEG…FAEVIENEWF (256 aa)) enclose the Protein kinase domain. ATP-binding positions include 37–45 (LGEGTFAKV) and Lys-60. Asp-154 (proton acceptor) is an active-site residue. The activation loop stretch occupies residues 172-201 (DFGLSALPQQVREDGLLHTTCGTPNYVAPE). Ser-176 carries the post-translational modification Phosphoserine. Residue Thr-190 is modified to Phosphothreonine. The region spanning 328-352 (KTPVTMNAFELISTSQGLNLGSLFE) is the NAF domain. The tract at residues 359 to 388 (KRKTRFTSKSSANEIVTKIEAAAAPMGFDV) is PPI. A disordered region spans residues 459-482 (KEEGTDGGGTNGAMANRTIAKQST).

This sequence belongs to the protein kinase superfamily. CAMK Ser/Thr protein kinase family. SNF1 subfamily. As to quaternary structure, part of a K(+)-channel calcium-sensing kinase/phosphatase complex composed by a calcium sensor CBL (CBL1, CBL2, CBL3 or CBL9), a kinase CIPK (CIPK6, CIPK16 or CIPK23), a phosphatase PP2C (AIP1) and a K(+)-channel (AKT1). Interacts with AKT1, CBL1, CBL2, CBL3, CBL5, CBL8, CBL9 and NRT1.1. Mn(2+) is required as a cofactor. In terms of processing, autophosphorylated. As to expression, in seedlings, mostly in vascular bundles, and in roots, especially in cortex and endodermis cells. In adult plants, mostly expressed in flowers, and, to a lower extent, in roots, leaves, stems and siliques, particularly in vascular tissues. Also detected in guard cells and root hairs.

The protein localises to the cell membrane. The catalysed reaction is L-seryl-[protein] + ATP = O-phospho-L-seryl-[protein] + ADP + H(+). The enzyme catalyses L-threonyl-[protein] + ATP = O-phospho-L-threonyl-[protein] + ADP + H(+). CIPK serine-threonine protein kinases interact with CBL proteins. Binding of a CBL protein to the regulatory NAF domain of CIPK protein leads to activation of the kinase in a calcium-dependent manner. Downstream of CBL1, CBL2, CBL3 and CBL9, regulates by phosphorylation the K(+) conductance and uptake of AKT1 in low K(+) condition, in response to calcium signaling and during the stomatal opening regulation by monitoring the turgor pressure in guard cells. In response to low nitrate concentration, phosphorylates NRT1.1, switching it from a low-affinity nitrate transporter to a high-affinity transporter. Confers tolerance to low potassium conditions. Involved in drought sensitivity and leaf transpiration. This chain is CBL-interacting serine/threonine-protein kinase 23 (CIPK23), found in Arabidopsis thaliana (Mouse-ear cress).